A 431-amino-acid chain; its full sequence is Adenylosuccinate synthetase (431 aa).

Residues 12 to 18 (GDEGKGK) and 40 to 42 (GHT) each bind GTP. Asp13 acts as the Proton acceptor in catalysis. Asp13 and Gly40 together coordinate Mg(2+). Residues 13–16 (DEGK), 38–41 (NAGH), Thr129, Arg143, Gln224, Thr239, and Arg303 contribute to the IMP site. His41 serves as the catalytic Proton donor. Position 299–305 (299–305 (VTTGRAR)) interacts with substrate. GTP is bound by residues Arg305, 331 to 333 (KLD), and 413 to 415 (GVG).

It belongs to the adenylosuccinate synthetase family. In terms of assembly, homodimer. Mg(2+) serves as cofactor.

The protein localises to the cytoplasm. The enzyme catalyses IMP + L-aspartate + GTP = N(6)-(1,2-dicarboxyethyl)-AMP + GDP + phosphate + 2 H(+). It participates in purine metabolism; AMP biosynthesis via de novo pathway; AMP from IMP: step 1/2. Functionally, plays an important role in the de novo pathway of purine nucleotide biosynthesis. Catalyzes the first committed step in the biosynthesis of AMP from IMP. The chain is Adenylosuccinate synthetase from Mycobacteroides abscessus (strain ATCC 19977 / DSM 44196 / CCUG 20993 / CIP 104536 / JCM 13569 / NCTC 13031 / TMC 1543 / L948) (Mycobacterium abscessus).